Here is a 91-residue protein sequence, read N- to C-terminus: uncharacterized protein (91 aa).

The next 3 membrane-spanning stretches (helical) occupy residues 4–21, 28–50, and 60–82; these read YAII…LRRG, IIEV…SHAV, and VKAF…GTYL.

It is found in the cell membrane. This is an uncharacterized protein from Archaeoglobus fulgidus (strain ATCC 49558 / DSM 4304 / JCM 9628 / NBRC 100126 / VC-16).